A 446-amino-acid polypeptide reads, in one-letter code: MGKYFGTDGVRGVANSELTPELAFKLGRAGGYVLTKEAAQPKVLIGRDTRISGEMLEASLVAGLLSIGAEVMRLGVISTPGVAFLTKQLSATAGIMISASHNPVEDNGIKFFGSDGFKLLDSQEEEIEALIDGEDTMPRPIGGDVGQLNDYFEGSQKYMQFLKQTVEGGFEGIHVAIDCANGAASSLATHVLADLDADISSMGSSPNGTNINACCGSTHPEELAKLVVEKQADVGLAFDGDADRLIAVDEKGEIVDGDKIMYIIASYLKEQGRLNNNTIVTTVMSNLGFYKALEEKQIETKQTAVGDRYVMEEMRKGNYNLGGEQSGHIIFLDYNTTGDGLLTGVQLLNIMKQTGKPLSELAAGMKTFPQCLINVRVTDKDAVKNNALVQQEIKRVEEAMAGEGRILVRPSGTEPLVRVMVEAKTDELCQQYANQIVDVVKEQLGA.

S100 acts as the Phosphoserine intermediate in catalysis. Residues S100, D239, D241, and D243 each coordinate Mg(2+). S100 is subject to Phosphoserine.

The protein belongs to the phosphohexose mutase family. Mg(2+) serves as cofactor. In terms of processing, activated by phosphorylation.

The enzyme catalyses alpha-D-glucosamine 1-phosphate = D-glucosamine 6-phosphate. Its function is as follows. Catalyzes the conversion of glucosamine-6-phosphate to glucosamine-1-phosphate. The sequence is that of Phosphoglucosamine mutase from Shouchella clausii (strain KSM-K16) (Alkalihalobacillus clausii).